The primary structure comprises 262 residues: Small ribosomal subunit protein eS1 (262 aa).

The protein belongs to the eukaryotic ribosomal protein eS1 family. As to quaternary structure, component of the small ribosomal subunit. Mature ribosomes consist of a small (40S) and a large (60S) subunit. The 40S subunit contains about 33 different proteins and 1 molecule of RNA (18S). The 60S subunit contains about 49 different proteins and 3 molecules of RNA (25S, 5.8S and 5S).

Its subcellular location is the cytoplasm. The chain is Small ribosomal subunit protein eS1 from Plasmodium knowlesi (strain H).